Reading from the N-terminus, the 61-residue chain is MAKTSMIIKAQRGSKFKVREYNRCPLCGRPRAYYRKFDMCRICLRKLASSGQIPGVIKSSW.

4 residues coordinate Zn(2+): Cys-24, Cys-27, Cys-40, and Cys-43.

The protein belongs to the universal ribosomal protein uS14 family. Zinc-binding uS14 subfamily. As to quaternary structure, part of the 30S ribosomal subunit. Contacts proteins S3 and S10. The cofactor is Zn(2+).

Functionally, binds 16S rRNA, required for the assembly of 30S particles and may also be responsible for determining the conformation of the 16S rRNA at the A site. This chain is Small ribosomal subunit protein uS14, found in Geotalea daltonii (strain DSM 22248 / JCM 15807 / FRC-32) (Geobacter daltonii).